A 403-amino-acid polypeptide reads, in one-letter code: GPI-N-acetylgalactosamine transferase PGAP4 (403 aa).

The Cytoplasmic portion of the chain corresponds to 1 to 22 (MTTSTSPAAMLLRRLRRLSWGS). Residues 23 to 43 (TAVQLFILTVVTFGLLAPLAC) form a helical membrane-spanning segment. Over 44–264 (HRLLHSYFYL…INPEPMRILE (221 aa)) the chain is Lumenal. Val-109 is a binding site for UDP-N-acetyl-alpha-D-galactosamine. 2 disulfide bridges follow: Cys-132/Cys-136 and Cys-144/Cys-194. The short motif at 211–213 (EDD) is the DXD motif element. A helical transmembrane segment spans residues 265–285 (WVGVGMLLGPVLTWIYMRFAC). Topologically, residues 286–287 (RP) are cytoplasmic. The chain crosses the membrane as a helical span at residues 288 to 308 (GFSWPVMLFFCLYSMGLVELV). The Lumenal segment spans residues 309–403 (GRHYFLELRR…LRYNFHPSLL (95 aa)). Cys-332 and Cys-333 are disulfide-bonded. 3 residues coordinate UDP-N-acetyl-alpha-D-galactosamine: Thr-334, Pro-335, and Lys-362.

This sequence belongs to the PGAP4 family. Glycosylated.

It is found in the golgi apparatus membrane. In terms of biological role, golgi-resident glycosylphosphatidylinositol (GPI)-N-acetylgalactosamine transferase that catalyzes the N-acetyl-beta-D-galactosamine transfer from an UDP-N-acetyl-alpha-D-galactosamine to the 4-OH-position of first mannose of the glycosylphosphatidylinositol (GPI) of a GPI-anchored protein (GPI-AP). This modification occurs after the fatty acid remodeling step of the GPI-anchor maturation. This is GPI-N-acetylgalactosamine transferase PGAP4 from Mus musculus (Mouse).